Reading from the N-terminus, the 55-residue chain is Large ribosomal subunit protein bL33 (55 aa).

It belongs to the bacterial ribosomal protein bL33 family.

This chain is Large ribosomal subunit protein bL33, found in Yersinia enterocolitica serotype O:8 / biotype 1B (strain NCTC 13174 / 8081).